The chain runs to 290 residues: Pyridoxal kinase PdxY (290 aa).

Residues Ser-12 and Thr-47–Gln-48 each bind substrate. ATP is bound by residues Asp-114, Glu-151, Lys-184, and Arg-211–Leu-214. Asp-225 is a substrate binding site.

Belongs to the pyridoxine kinase family. PdxY subfamily. In terms of assembly, homodimer. It depends on Mg(2+) as a cofactor.

It catalyses the reaction pyridoxal + ATP = pyridoxal 5'-phosphate + ADP + H(+). Its pathway is cofactor metabolism; pyridoxal 5'-phosphate salvage; pyridoxal 5'-phosphate from pyridoxal: step 1/1. In terms of biological role, pyridoxal kinase involved in the salvage pathway of pyridoxal 5'-phosphate (PLP). Catalyzes the phosphorylation of pyridoxal to PLP. In Pseudomonas entomophila (strain L48), this protein is Pyridoxal kinase PdxY.